Reading from the N-terminus, the 466-residue chain is Ribulose bisphosphate carboxylase large chain (466 aa).

K5 is subject to N6,N6,N6-trimethyllysine. 2 residues coordinate substrate: N114 and T164. The active-site Proton acceptor is K166. A substrate-binding site is contributed by K168. The Mg(2+) site is built by K192, D194, and E195. K192 bears the N6-carboxylysine mark. H285 (proton acceptor) is an active-site residue. Residues R286, H318, and S370 each contribute to the substrate site.

The protein belongs to the RuBisCO large chain family. Type I subfamily. In terms of assembly, heterohexadecamer of 8 large chains and 8 small chains; disulfide-linked. The disulfide link is formed within the large subunit homodimers. It depends on Mg(2+) as a cofactor. In terms of processing, the disulfide bond which can form in the large chain dimeric partners within the hexadecamer appears to be associated with oxidative stress and protein turnover.

The protein localises to the plastid. Its subcellular location is the chloroplast. It catalyses the reaction 2 (2R)-3-phosphoglycerate + 2 H(+) = D-ribulose 1,5-bisphosphate + CO2 + H2O. The enzyme catalyses D-ribulose 1,5-bisphosphate + O2 = 2-phosphoglycolate + (2R)-3-phosphoglycerate + 2 H(+). Functionally, ruBisCO catalyzes two reactions: the carboxylation of D-ribulose 1,5-bisphosphate, the primary event in carbon dioxide fixation, as well as the oxidative fragmentation of the pentose substrate in the photorespiration process. Both reactions occur simultaneously and in competition at the same active site. The sequence is that of Ribulose bisphosphate carboxylase large chain from Berzelia lanuginosa (Buttonbush).